Here is a 293-residue protein sequence, read N- to C-terminus: Probable E3 ubiquitin-protein ligase RNF144A-B (293 aa).

Residues 16–237 (PLLSCKLCLG…YDKGPCRNKL (222 aa)) are TRIAD supradomain. Positions 20, 23, 43, 46, 111, 116, 135, 138, 143, 146, 151, 156, 186, and 189 each coordinate Zn(2+). The RING-type 1 zinc-finger motif lies at 20-70 (CKLCLGEFPLEQMTTISQCQCIFCSLCLKQYVELLIKEGLETAISCPDSAC). The IBR-type zinc finger occupies 91 to 156 (QHYKRLQFER…RADCHTGQAC (66 aa)). The segment at 186–215 (CPKCKVYIERDEGCAQMMCKNCKHAFCWYC) adopts an RING-type 2; atypical zinc-finger fold. Cys199 is a catalytic residue. Cys204, Cys207, Cys212, Cys215, His227, and Cys233 together coordinate Zn(2+). The helical transmembrane segment at 251 to 271 (VVGIFAGFGLLLLVASPFLLL) threads the bilayer.

Belongs to the RBR family. RNF144 subfamily.

It is found in the membrane. The catalysed reaction is [E2 ubiquitin-conjugating enzyme]-S-ubiquitinyl-L-cysteine + [acceptor protein]-L-lysine = [E2 ubiquitin-conjugating enzyme]-L-cysteine + [acceptor protein]-N(6)-ubiquitinyl-L-lysine.. It participates in protein modification; protein ubiquitination. E3 ubiquitin-protein ligase which accepts ubiquitin from E2 ubiquitin-conjugating enzymes ube2l3 and ube2l6 in the form of a thioester and then directly transfers the ubiquitin to targeted substrates. This Danio rerio (Zebrafish) protein is Probable E3 ubiquitin-protein ligase RNF144A-B (rnf144ab).